The primary structure comprises 283 residues: NAD kinase (283 aa).

Aspartate 67 serves as the catalytic Proton acceptor. Residues 67–68, arginine 72, 136–137, lysine 147, arginine 164, aspartate 166, 177–182, and glutamine 236 contribute to the NAD(+) site; these read DG, NE, and TAYSMS.

This sequence belongs to the NAD kinase family. Requires a divalent metal cation as cofactor.

The protein localises to the cytoplasm. The catalysed reaction is NAD(+) + ATP = ADP + NADP(+) + H(+). Its function is as follows. Involved in the regulation of the intracellular balance of NAD and NADP, and is a key enzyme in the biosynthesis of NADP. Catalyzes specifically the phosphorylation on 2'-hydroxyl of the adenosine moiety of NAD to yield NADP. This is NAD kinase from Methanothermobacter thermautotrophicus (strain ATCC 29096 / DSM 1053 / JCM 10044 / NBRC 100330 / Delta H) (Methanobacterium thermoautotrophicum).